The primary structure comprises 302 residues: Large ribosomal subunit protein uL18 (302 aa).

Belongs to the universal ribosomal protein uL18 family. Component of the large ribosomal subunit (LSU).

Its subcellular location is the cytoplasm. It localises to the nucleus. Its function is as follows. Component of the ribosome, a large ribonucleoprotein complex responsible for the synthesis of proteins in the cell. The small ribosomal subunit (SSU) binds messenger RNAs (mRNAs) and translates the encoded message by selecting cognate aminoacyl-transfer RNA (tRNA) molecules. The large subunit (LSU) contains the ribosomal catalytic site termed the peptidyl transferase center (PTC), which catalyzes the formation of peptide bonds, thereby polymerizing the amino acids delivered by tRNAs into a polypeptide chain. The nascent polypeptides leave the ribosome through a tunnel in the LSU and interact with protein factors that function in enzymatic processing, targeting, and the membrane insertion of nascent chains at the exit of the ribosomal tunnel. This Cucumis sativus (Cucumber) protein is Large ribosomal subunit protein uL18 (RPL5).